The chain runs to 387 residues: Beta-carotene 4-ketolase (387 aa).

The interval 1–78 (MPHSIDMEDS…GNPTVDDASQ (78 aa)) is disordered. Composition is skewed to polar residues over residues 43–53 (NWQTQYHSSEG) and 65–78 (DATT…DASQ).

It carries out the reaction echinenone + 2 AH2 + 2 O2 = canthaxanthin + 2 A + 3 H2O. The catalysed reaction is all-trans-beta-carotene + 2 AH2 + 2 O2 = echinenone + 2 A + 3 H2O. It participates in carotenoid biosynthesis. Its function is as follows. Involved in the biosynthesis of ketocarotenoids which are powerful anti-oxidative molecules. Catalyzes the conversion of beta-carotene to canthaxanthin via echinenone. The polypeptide is Beta-carotene 4-ketolase (Protosiphon botryoides (Green alga)).